The sequence spans 367 residues: Protein RecA (367 aa).

ATP is bound at residue 73 to 80; that stretch reads GPESSGKT. The segment at 345–367 is disordered; it reads DEPVAKKASAKESKEAKELKEVE.

The protein belongs to the RecA family.

The protein localises to the cytoplasm. In terms of biological role, can catalyze the hydrolysis of ATP in the presence of single-stranded DNA, the ATP-dependent uptake of single-stranded DNA by duplex DNA, and the ATP-dependent hybridization of homologous single-stranded DNAs. It interacts with LexA causing its activation and leading to its autocatalytic cleavage. In Janthinobacterium sp. (strain Marseille) (Minibacterium massiliensis), this protein is Protein RecA.